Reading from the N-terminus, the 315-residue chain is Aldo-keto reductase family 4 member C11 (315 aa).

A2 is subject to N-acetylalanine. Residues 23–24 (TW) and D47 contribute to the NADP(+) site. Y52 (proton donor) is an active-site residue. Residues H114, 158-159 (SN), Q180, 207-213 (SPLGSPG), 256-258 (KST), and 262-266 (RIREN) each bind NADP(+). Phosphoserine is present on S295.

It belongs to the aldo/keto reductase family.

In terms of biological role, oxidoreductase that may act on a broad range of substrates such as ketosteroids, aldehydes, ketones and sugars. The protein is Aldo-keto reductase family 4 member C11 (AKR4C11) of Arabidopsis thaliana (Mouse-ear cress).